Consider the following 1103-residue polypeptide: Voltage-dependent calcium channel subunit alpha-2/delta-1 (1103 aa).

An N-terminal signal peptide occupies residues 1-24 (MAAGCLLALTLTLFQSLLIGPSSE). The Extracellular portion of the chain corresponds to 25–1073 (EPFPSAVTIK…VLEDYTDCGG (1049 aa)). Residue Asn92 is glycosylated (N-linked (GlcNAc...) asparagine). At Ser119 the chain carries Phosphoserine. 2 N-linked (GlcNAc...) asparagine glycosylation sites follow: Asn136 and Asn184. In terms of domain architecture, VWFA spans 253–430 (DMLILVDVSG…INTQEYLDVL (178 aa)). Residues Asp259, Ser261, and Ser263 each contribute to the a divalent metal cation site. Residues 259 to 263 (DVSGS) carry the MIDAS-like motif motif. Asn324, Asn348, Asn468, Asn475, Asn604, Asn613, Asn675, Asn781, Asn824, Asn888, Asn895, Asn985, and Asn998 each carry an N-linked (GlcNAc...) asparagine glycan. Cysteines 404 and 1059 form a disulfide. The Cache domain maps to 446-556 (WTNVYLDALE…NIQNPKSQEP (111 aa)). A helical transmembrane segment spans residues 1074-1094 (VSGLNPSLWYIIGIQFLLLWL). Residues 1095–1103 (VSGSTHRLL) are Cytoplasmic-facing.

Belongs to the calcium channel subunit alpha-2/delta family. Dimer formed of alpha-2-1 and delta-1 chains; disulfide-linked. Voltage-dependent calcium channels are multisubunit complexes, consisting of alpha-1 (CACNA1), alpha-2 (CACNA2D), beta (CACNB) and delta (CACNA2D) subunits in a 1:1:1:1 ratio. Proteolytically processed into subunits alpha-2-1 and delta-1 that are disulfide-linked. As to expression, isoform 1 is expressed in skeletal muscle. Isoform 2 is expressed in the central nervous system. Isoform 2, isoform 4 and isoform 5 are expressed in neuroblastoma cells. Isoform 3, isoform 4 and isoform 5 are expressed in the aorta.

The protein resides in the membrane. It localises to the cell membrane. Functionally, the alpha-2/delta subunit of voltage-dependent calcium channels regulates calcium current density and activation/inactivation kinetics of the calcium channel. Plays an important role in excitation-contraction coupling. This Homo sapiens (Human) protein is Voltage-dependent calcium channel subunit alpha-2/delta-1 (CACNA2D1).